The primary structure comprises 467 residues: MKIRTRYAPSPTGFLHIGGARTALFNYLFAKHHNGDFILRIEDSDNSRNIKDGEKSQIENLLWLGIIPDEKPGSETKFGPYRQSEKLERYQKLAQELIKKGFAYYAFDNQEELELQKKEQIAKGIFSFRYDQNWLKISDQEKQKRLKNKHFVIRFKVDKAKNFCWNDLVRGQICFEGSAISDWVIIKSDGFPTYNFAVVVDDFDMEISHIFRGEEHISNTPKQIGIYQAFNWKTPKFGHLTIITDKNGKKLSKRDKSLFQFIEDYKNQGYHSEAFFNFLALLGWTSPDSQEFFDHKSLIKAFDYKRLSKAPSYFDIEKLNWFSKSYISKMPVDKILENLELSDNQIWNQFFVETFQKSSIKYADFYKNFEFFHRPKQEMDEKMLEIFEKLDKKPVKIFASKIDYQNWDYTKINDLIKEIGQKLEITGKNLLLPIRLATTFTNSGPELARAIWLLGKKIIEKRLLKWK.

The short motif at 9–19 (PSPTGFLHIGG) is the 'HIGH' region element. A 'KMSKS' region motif is present at residues 250–254 (KLSKR). Lysine 253 contributes to the ATP binding site.

It belongs to the class-I aminoacyl-tRNA synthetase family. Glutamate--tRNA ligase type 1 subfamily. In terms of assembly, monomer.

It localises to the cytoplasm. It catalyses the reaction tRNA(Glu) + L-glutamate + ATP = L-glutamyl-tRNA(Glu) + AMP + diphosphate. Functionally, catalyzes the attachment of glutamate to tRNA(Glu) in a two-step reaction: glutamate is first activated by ATP to form Glu-AMP and then transferred to the acceptor end of tRNA(Glu). This chain is Glutamate--tRNA ligase, found in Mesomycoplasma hyopneumoniae (strain 232) (Mycoplasma hyopneumoniae).